The primary structure comprises 543 residues: uncharacterized protein (543 aa).

One can recognise a PE domain in the interval 1–93; that stretch reads MSFVTAAPEM…GGAYSSAEAA (93 aa). A disordered region spans residues 194–214; sequence GGAGGPGGPTDVPAGTGGAGG.

Belongs to the mycobacterial PE family. PGRS subfamily.

This is an uncharacterized protein from Mycobacterium tuberculosis (strain CDC 1551 / Oshkosh).